The sequence spans 246 residues: Probable maleylacetoacetate isomerase 1 (246 aa).

Residues 32–116 (TKPILYSYWP…YLEETRPQPA (85 aa)) form the GST N-terminal domain. Residues 42-47 (SSCSWR), valine 88, 100-101 (DS), glutamine 140, and 144-146 (NVS) each bind glutathione. The GST C-terminal domain occupies 121 to 241 (DPVKRAKIRE…HPSTQPDCPP (121 aa)).

It belongs to the GST superfamily. Zeta family. Glutathione is required as a cofactor.

It localises to the cytoplasm. It catalyses the reaction 4-maleylacetoacetate = 4-fumarylacetoacetate. It carries out the reaction RX + glutathione = an S-substituted glutathione + a halide anion + H(+). The protein operates within amino-acid degradation; L-phenylalanine degradation; acetoacetate and fumarate from L-phenylalanine: step 5/6. Catalyzes the glutathione dependent oxygenation of dichloroacetic acid to glyoxylic acid in vitro. Possesses low glutathione thioltransferase activity toward 4-hydroxynonenal (4-HNE). Has no glutathione thioltransferase activity with adrenochrome, phenethyl isothiocyanate (PEITC), 5-hydroperoxyeicosatetraenoic acid ((5S)-HpETE), prostaglandin A2 (PGA2) or 2-hydroxyethyldisulfide (HED). This is Probable maleylacetoacetate isomerase 1 (GstZ1) from Drosophila melanogaster (Fruit fly).